The primary structure comprises 658 residues: Protein cueball (658 aa).

Topologically, residues M1–T543 are extracellular. N-linked (GlcNAc...) asparagine glycosylation is found at N25 and N122. 3 LDL-receptor class B repeats span residues R100–L142, R152–S195, and N196–Y241. 3 EGF-like domains span residues E352–E384, D387–E422, and E458–E495. 8 cysteine pairs are disulfide-bonded: C356/C365, C360/C375, C391/C401, C395/C410, C412/C421, C462/C472, C466/C483, and C485/C494. N400 and N415 each carry an N-linked (GlcNAc...) asparagine glycan. N-linked (GlcNAc...) asparagine glycosylation is present at N476. Residue N541 is glycosylated (N-linked (GlcNAc...) asparagine). Residues V544–I564 form a helical membrane-spanning segment. Topologically, residues V565–P658 are cytoplasmic.

This sequence belongs to the cueball family.

Its subcellular location is the cell membrane. Its function is as follows. Has a role in spermatogenesis and oogenesis. The chain is Protein cueball from Culex quinquefasciatus (Southern house mosquito).